The primary structure comprises 72 residues: Large ribosomal subunit protein eL40 (72 aa).

The protein belongs to the eukaryotic ribosomal protein eL40 family.

The polypeptide is Large ribosomal subunit protein eL40 (Nicotiana tabacum (Common tobacco)).